A 131-amino-acid chain; its full sequence is Small ribosomal subunit protein uS12 (131 aa).

Residues 1–32 (MPTFSQLVRKGRTAPRYKTASPALQGSPQRRG) form a disordered region. The residue at position 89 (Asp-89) is a 3-methylthioaspartic acid. A disordered region spans residues 110 to 131 (RKQGRSKYGAKRAKGGAAAGKK). The segment covering 111-131 (KQGRSKYGAKRAKGGAAAGKK) has biased composition (basic residues).

Belongs to the universal ribosomal protein uS12 family. In terms of assembly, part of the 30S ribosomal subunit. Contacts proteins S8 and S17. May interact with IF1 in the 30S initiation complex.

Its function is as follows. With S4 and S5 plays an important role in translational accuracy. Interacts with and stabilizes bases of the 16S rRNA that are involved in tRNA selection in the A site and with the mRNA backbone. Located at the interface of the 30S and 50S subunits, it traverses the body of the 30S subunit contacting proteins on the other side and probably holding the rRNA structure together. The combined cluster of proteins S8, S12 and S17 appears to hold together the shoulder and platform of the 30S subunit. In Acidobacterium capsulatum (strain ATCC 51196 / DSM 11244 / BCRC 80197 / JCM 7670 / NBRC 15755 / NCIMB 13165 / 161), this protein is Small ribosomal subunit protein uS12.